Consider the following 707-residue polypeptide: E3 ubiquitin-protein ligase MARCHF7 (707 aa).

Met1 carries the post-translational modification N-acetylmethionine. 5 disordered regions span residues 1–126 (MESK…QVPR), 157–279 (LMDY…RRTT), 294–343 (FFSR…RASE), 361–425 (SHNH…HIFR), and 444–473 (AANRPQASAASSSATTGGSTSDSAQGGRNT). Low complexity predominate over residues 17–33 (SSSLSARMMSGSRGSSL). The span at 37-48 (YHSRDSSFRLDS) shows a compositional bias: basic and acidic residues. Positions 52 to 65 (STSASASASPFQSA) are enriched in low complexity. Composition is skewed to polar residues over residues 66 to 83 (WYSESEITQGARSRSQNQ), 95 to 126 (SCTNCTTSAGRNVGNGLNTLSDSSWRHSQVPR), 189 to 212 (NSMSTLQLNTSSTNHQLPSEHQTI), and 254 to 270 (ISNSERVVSSQRPFQES). Over residues 294-303 (FFSRRSSQDS) the composition is skewed to low complexity. Polar residues-rich tracts occupy residues 304 to 336 (LNTRSLSSENSYVSPRILTASQSRSNVPSTSEV), 373 to 392 (FNQESESRNTGPWLSSSLRN), and 412 to 421 (IPTSDTSSRS). A phosphoserine mark is found at Ser317 and Ser389. Residues 444 to 470 (AANRPQASAASSSATTGGSTSDSAQGG) show a composition bias toward low complexity. An RING-CH-type zinc finger spans residues 544-614 (SEEEEGDLCR…ELCKEKLELN (71 aa)). Residues Cys552, Cys555, Cys570, Cys572, His580, Cys583, Cys604, and Cys607 each coordinate Zn(2+). Thr686 bears the Phosphothreonine mark. A phosphoserine mark is found at Ser687 and Ser691.

It is found in the cytoplasm. It carries out the reaction S-ubiquitinyl-[E2 ubiquitin-conjugating enzyme]-L-cysteine + [acceptor protein]-L-lysine = [E2 ubiquitin-conjugating enzyme]-L-cysteine + N(6)-ubiquitinyl-[acceptor protein]-L-lysine.. It functions in the pathway protein modification; protein ubiquitination. Functionally, E3 ubiquitin-protein ligase which may specifically enhance the E2 activity of HIP2. E3 ubiquitin ligases accept ubiquitin from an E2 ubiquitin-conjugating enzyme in the form of a thioester and then directly transfer the ubiquitin to targeted substrates. May be involved in T-cell proliferation by regulating LIF secretion. May play a role in lysosome homeostasis. Promotes 'Lys-6', 'Lys-11' and 'Lys-63'-linked mixed polyubiquitination on ATG14 leading to the inhibition of autophagy by impairing the interaction between ATG14 and STX7. Participates in the dopamine-mediated negative regulation of the NLRP3 inflammasome by promoting its uibiquitination and subsequent degradation. This chain is E3 ubiquitin-protein ligase MARCHF7 (MARCHF7), found in Pongo abelii (Sumatran orangutan).